Reading from the N-terminus, the 603-residue chain is Myotubularin (603 aa).

Residues 1 to 13 (MASASTSKYNSHS) show a composition bias toward polar residues. Residues 1 to 25 (MASASTSKYNSHSLENESIKRTSRD) form a disordered region. 2 positions are modified to phosphoserine: S13 and S18. A compositionally biased stretch (basic and acidic residues) spans 14–25 (LENESIKRTSRD). The GRAM domain maps to 29 to 97 (RDLTEAVPRL…GVISRIEKMG (69 aa)). The 376-residue stretch at 163–538 (GWTVYNPVEE…RHLELWVNYY (376 aa)) folds into the Myotubularin phosphatase domain. N288, N313, and I314 together coordinate a 1,2-diacyl-sn-glycero-3-phospho-(1D-myo-inositol-3,5-bisphosphate). A 1,2-diacyl-sn-glycero-3-phospho-(1D-myo-inositol-3-phosphate) contacts are provided by N288, N313, and I314. C375 acts as the Phosphocysteine intermediate in catalysis. A 1,2-diacyl-sn-glycero-3-phospho-(1D-myo-inositol-3,5-bisphosphate) contacts are provided by S376, D377, G378, W379, D380, R381, K417, and R421. The a 1,2-diacyl-sn-glycero-3-phospho-(1D-myo-inositol-3-phosphate) site is built by S376, D377, G378, W379, D380, and R381. Residue R421 coordinates a 1,2-diacyl-sn-glycero-3-phospho-(1D-myo-inositol-3-phosphate). A Phosphothreonine modification is found at T495. A disordered region spans residues 579 to 603 (SAKLSDPPTSPSSPSQMMPHVQTHF). Position 588 is a phosphoserine (S588).

This sequence belongs to the protein-tyrosine phosphatase family. Non-receptor class myotubularin subfamily. In terms of assembly, heterodimer with MTMR12. Interacts with KMT2A/MLL1 (via SET domain). Interacts with DES in skeletal muscle but not in cardiac muscle. Interacts with SPEG.

It localises to the cytoplasm. Its subcellular location is the cell membrane. The protein resides in the cell projection. It is found in the filopodium. The protein localises to the ruffle. It localises to the late endosome. Its subcellular location is the myofibril. The protein resides in the sarcomere. The enzyme catalyses a 1,2-diacyl-sn-glycero-3-phospho-(1D-myo-inositol-3-phosphate) + H2O = a 1,2-diacyl-sn-glycero-3-phospho-(1D-myo-inositol) + phosphate. It catalyses the reaction a 1,2-diacyl-sn-glycero-3-phospho-(1D-myo-inositol-3,5-bisphosphate) + H2O = a 1,2-diacyl-sn-glycero-3-phospho-(1D-myo-inositol-5-phosphate) + phosphate. It carries out the reaction 1,2-dioctanoyl-sn-glycero-3-phospho-(1-D-myo-inositol-3-phosphate) + H2O = 1,2-dioctanoyl-sn-glycero-3-phospho-(1D-myo-inositol) + phosphate. The catalysed reaction is 1,2-dioctanoyl-sn-glycero-3-phospho-(1D-myo-inositol-3,5-bisphosphate) + H2O = 1,2-dioctanoyl-sn-glycero-3-phospho-(1D-myo-inositol-5-phosphate) + phosphate. The enzyme catalyses 1,2-dihexadecanoyl-sn-glycero-3-phospho-(1D-myo-inositol-3,5-phosphate) + H2O = 1,2-dihexadecanoyl-sn-glycero-3-phospho-(1D-myo-inositol-5-phosphate) + phosphate. Its activity is regulated as follows. Allosterically activated by phosphatidylinositol 5-phosphate (PI5P). Its function is as follows. Lipid phosphatase which dephosphorylates phosphatidylinositol 3-monophosphate (PI3P) and phosphatidylinositol 3,5-bisphosphate (PI(3,5)P2). Has also been shown to dephosphorylate phosphotyrosine- and phosphoserine-containing peptides. Negatively regulates EGFR degradation through regulation of EGFR trafficking from the late endosome to the lysosome. Plays a role in vacuolar formation and morphology. Regulates desmin intermediate filament assembly and architecture. Plays a role in mitochondrial morphology and positioning. Required for skeletal muscle maintenance but not for myogenesis. In skeletal muscles, stabilizes MTMR12 protein levels. The sequence is that of Myotubularin from Pongo abelii (Sumatran orangutan).